The primary structure comprises 169 residues: NADH-quinone oxidoreductase subunit B (169 aa).

Positions 42, 43, 107, and 136 each coordinate [4Fe-4S] cluster.

It belongs to the complex I 20 kDa subunit family. NDH-1 is composed of 14 different subunits. Subunits NuoB, C, D, E, F, and G constitute the peripheral sector of the complex. The cofactor is [4Fe-4S] cluster.

It localises to the cell inner membrane. It carries out the reaction a quinone + NADH + 5 H(+)(in) = a quinol + NAD(+) + 4 H(+)(out). Functionally, NDH-1 shuttles electrons from NADH, via FMN and iron-sulfur (Fe-S) centers, to quinones in the respiratory chain. The immediate electron acceptor for the enzyme in this species is believed to be ubiquinone. Couples the redox reaction to proton translocation (for every two electrons transferred, four hydrogen ions are translocated across the cytoplasmic membrane), and thus conserves the redox energy in a proton gradient. This is NADH-quinone oxidoreductase subunit B from Sulfurimonas denitrificans (strain ATCC 33889 / DSM 1251) (Thiomicrospira denitrificans (strain ATCC 33889 / DSM 1251)).